The chain runs to 309 residues: ADP-L-glycero-D-manno-heptose-6-epimerase (309 aa).

Residues Met10–Ile11, Asp31–Asn32, Lys38, Lys53, Glu75–Ser79, and Asn92 contribute to the NADP(+) site. The active-site Proton acceptor is the Tyr139. NADP(+) is bound at residue Lys143. Position 168 (Asn168) interacts with substrate. Val169 and Lys177 together coordinate NADP(+). Catalysis depends on Lys177, which acts as the Proton acceptor. Substrate contacts are provided by residues Ser179, His186, Phe200 to Ser203, Arg208, and Tyr271.

Belongs to the NAD(P)-dependent epimerase/dehydratase family. HldD subfamily. As to quaternary structure, homopentamer. The cofactor is NADP(+).

The catalysed reaction is ADP-D-glycero-beta-D-manno-heptose = ADP-L-glycero-beta-D-manno-heptose. It participates in nucleotide-sugar biosynthesis; ADP-L-glycero-beta-D-manno-heptose biosynthesis; ADP-L-glycero-beta-D-manno-heptose from D-glycero-beta-D-manno-heptose 7-phosphate: step 4/4. Functionally, catalyzes the interconversion between ADP-D-glycero-beta-D-manno-heptose and ADP-L-glycero-beta-D-manno-heptose via an epimerization at carbon 6 of the heptose. The chain is ADP-L-glycero-D-manno-heptose-6-epimerase from Serratia proteamaculans (strain 568).